The primary structure comprises 388 residues: Mitochondrial distribution and morphology protein 12 (388 aa).

Residues methionine 1–leucine 388 form the SMP-LTD domain. 2 disordered regions span residues aspartate 75 to alanine 101 and proline 209 to serine 249. Residues glutamate 83–alanine 101 are compositionally biased toward basic and acidic residues. The segment covering proline 234 to leucine 243 has biased composition (pro residues).

The protein belongs to the MDM12 family. Component of the ER-mitochondria encounter structure (ERMES) or MDM complex, composed of MMM1, MDM10, MDM12 and MDM34. An MMM1 homodimer associates with one molecule of MDM12 on each side in a pairwise head-to-tail manner, and the SMP-LTD domains of MMM1 and MDM12 generate a continuous hydrophobic tunnel for phospholipid trafficking.

Its subcellular location is the mitochondrion outer membrane. It is found in the endoplasmic reticulum membrane. Component of the ERMES/MDM complex, which serves as a molecular tether to connect the endoplasmic reticulum (ER) and mitochondria. Components of this complex are involved in the control of mitochondrial shape and protein biogenesis, and function in nonvesicular lipid trafficking between the ER and mitochondria. MDM12 is required for the interaction of the ER-resident membrane protein MMM1 and the outer mitochondrial membrane-resident beta-barrel protein MDM10. The MDM12-MMM1 subcomplex functions in the major beta-barrel assembly pathway that is responsible for biogenesis of all mitochondrial outer membrane beta-barrel proteins, and acts in a late step after the SAM complex. The MDM10-MDM12-MMM1 subcomplex further acts in the TOM40-specific pathway after the action of the MDM12-MMM1 complex. Essential for establishing and maintaining the structure of mitochondria and maintenance of mtDNA nucleoids. In Cryptococcus neoformans var. neoformans serotype D (strain JEC21 / ATCC MYA-565) (Filobasidiella neoformans), this protein is Mitochondrial distribution and morphology protein 12.